A 1017-amino-acid chain; its full sequence is Voltage-gated delayed rectifier potassium channel KCNH4 (1017 aa).

At 1–232 (MPVMKGLLAP…YSIPKAVWDG (232 aa)) the chain is on the cytoplasmic side. Residues 14–90 (FLDTIATRFD…QRLQKALEGH (77 aa)) enclose the PAS domain. The region spanning 93-145 (HRAEICFYRKDGSAFWCLLDMMPIKNELGEVVLFLFSFKDISQSGGPGLGSPG) is the PAC domain. The disordered stretch occupies residues 139 to 170 (PGLGSPGIHGDNNNHENSLGRRGASSRLRSTR). A helical membrane pass occupies residues 233–253 (LILLATFYVAVTVPYNVCFAG). The Extracellular portion of the chain corresponds to 254–262 (DDDTPITSR). The chain crosses the membrane as a helical span at residues 263-283 (HTLVSDIAVEMLFILDIILNF). Topologically, residues 284–305 (RTTYVSQSGQVVSAPRSIGLHY) are cytoplasmic. A helical membrane pass occupies residues 306–326 (LATWFFVDLIAALPFDLLYVF). Over 327–334 (NITVTSLV) the chain is Extracellular. Residues 335 to 355 (HLLKTVRLLRLLRLLQKLERY) form a helical; Voltage-sensor membrane-spanning segment. At 356–364 (SQCSAVVLT) the chain is on the cytoplasmic side. Residues 365–385 (LLMSVFALLAHWMACVWYVIG) form a helical membrane-spanning segment. The Extracellular portion of the chain corresponds to 386 to 427 (RREMEANDPLLWDIGWLHELGKRLEEPYVNGSAGGPSRRSAY). An N-linked (GlcNAc...) asparagine glycan is attached at asparagine 415. The pore-forming intramembrane region spans 428-448 (IAALYFTLSSLTSVGFGNVCA). The short motif at 440–445 (SVGFGN) is the Selectivity filter element. Topologically, residues 449–454 (NTDAEK) are extracellular. The chain crosses the membrane as a helical span at residues 455–475 (IFSICTMLIGALMHAVVFGNV). The Cytoplasmic segment spans residues 476-1017 (TAIIQRMYSR…SFQSGSDTFH (542 aa)). The tract at residues 557–621 (LFGAASRGCL…AILGKGDLIG (65 aa)) is cNMP-binding domain. Disordered regions lie at residues 690-749 (GSEN…PNLS) and 771-870 (LVSS…ELAT). The span at 703-726 (PRLSQARSDTLGSSSDKTLPSITE) shows a compositional bias: polar residues. Low complexity-rich tracts occupy residues 771-786 (LVSS…PALA) and 806-820 (PPQL…FGPP). The stretch at 873-907 (AEEVKEKVCRLNQEISRLNQEVSQLSRELRQVMGL) forms a coiled coil. The disordered stretch occupies residues 972–1017 (SELRSSMVPPFPSEPDPLGPSPVPEASPLTPSLLKHSFQSGSDTFH). Residues 980–996 (PPFPSEPDPLGPSPVPE) are compositionally biased toward pro residues. The span at 1008–1017 (SFQSGSDTFH) shows a compositional bias: polar residues.

This sequence belongs to the potassium channel family. H (Eag) (TC 1.A.1.20) subfamily. Kv12.3/KCNH4 sub-subfamily. The potassium channel is probably composed of a homo- or heterotetrameric complex of pore-forming alpha subunits that can associate with modulating beta subunits. Highly expressed in adult testis, and in adult and embryonic brain. In adult brain found in piriform cortex, olfactory tubercle, cerebral cortex, hippocampus pyramidial cells and dentate gyrus and basal ganglia of caudate/putamen and accumbens nucleus. Detected at intermediate levels in lung, spinal cord, and pituitary.

It localises to the membrane. It catalyses the reaction K(+)(in) = K(+)(out). Its function is as follows. Pore-forming (alpha) subunit of a voltage-gated delayed rectifier. Activates at more negative voltages, exhibits fast prepulse-independent activation kinetics and deactivates much more slowly, but shows no inactivation. This Rattus norvegicus (Rat) protein is Voltage-gated delayed rectifier potassium channel KCNH4.